The following is a 107-amino-acid chain: Small ribosomal subunit protein uS10c (107 aa).

The protein belongs to the universal ribosomal protein uS10 family. Part of the 30S ribosomal subunit.

It is found in the plastid. The protein localises to the chloroplast. Its function is as follows. Involved in the binding of tRNA to the ribosomes. The protein is Small ribosomal subunit protein uS10c of Thalassiosira pseudonana (Marine diatom).